A 245-amino-acid chain; its full sequence is tRNA (guanine-N(1)-)-methyltransferase (245 aa).

S-adenosyl-L-methionine-binding positions include G111 and 131–136 (IGDYVL).

Belongs to the RNA methyltransferase TrmD family. As to quaternary structure, homodimer.

It localises to the cytoplasm. It catalyses the reaction guanosine(37) in tRNA + S-adenosyl-L-methionine = N(1)-methylguanosine(37) in tRNA + S-adenosyl-L-homocysteine + H(+). Functionally, specifically methylates guanosine-37 in various tRNAs. The chain is tRNA (guanine-N(1)-)-methyltransferase from Staphylococcus carnosus (strain TM300).